We begin with the raw amino-acid sequence, 423 residues long: UDP-N-acetylglucosamine 1-carboxyvinyltransferase 2 (423 aa).

23–24 (KN) is a phosphoenolpyruvate binding site. Position 93 (R93) interacts with UDP-N-acetyl-alpha-D-glucosamine. C117 functions as the Proton donor in the catalytic mechanism. C117 is subject to 2-(S-cysteinyl)pyruvic acid O-phosphothioketal. Residues 122-126 (RPIDQ), D305, and I327 contribute to the UDP-N-acetyl-alpha-D-glucosamine site.

It belongs to the EPSP synthase family. MurA subfamily.

It localises to the cytoplasm. The enzyme catalyses phosphoenolpyruvate + UDP-N-acetyl-alpha-D-glucosamine = UDP-N-acetyl-3-O-(1-carboxyvinyl)-alpha-D-glucosamine + phosphate. It participates in cell wall biogenesis; peptidoglycan biosynthesis. Functionally, cell wall formation. Adds enolpyruvyl to UDP-N-acetylglucosamine. The protein is UDP-N-acetylglucosamine 1-carboxyvinyltransferase 2 of Listeria monocytogenes serotype 4b (strain F2365).